Here is a 346-residue protein sequence, read N- to C-terminus: Glycerol-3-phosphate dehydrogenase [NAD(P)+] (346 aa).

Positions 15, 16, 36, and 110 each coordinate NADPH. Residues Lys-110, Gly-139, and Ser-141 each coordinate sn-glycerol 3-phosphate. Ala-143 contacts NADPH. Residues Lys-194, Asp-247, Ser-257, Arg-258, and Asn-259 each coordinate sn-glycerol 3-phosphate. Lys-194 serves as the catalytic Proton acceptor. Arg-258 provides a ligand contact to NADPH. Residues Val-282 and Glu-284 each coordinate NADPH.

This sequence belongs to the NAD-dependent glycerol-3-phosphate dehydrogenase family.

The protein resides in the cytoplasm. The catalysed reaction is sn-glycerol 3-phosphate + NAD(+) = dihydroxyacetone phosphate + NADH + H(+). It catalyses the reaction sn-glycerol 3-phosphate + NADP(+) = dihydroxyacetone phosphate + NADPH + H(+). It functions in the pathway membrane lipid metabolism; glycerophospholipid metabolism. In terms of biological role, catalyzes the reduction of the glycolytic intermediate dihydroxyacetone phosphate (DHAP) to sn-glycerol 3-phosphate (G3P), the key precursor for phospholipid synthesis. The sequence is that of Glycerol-3-phosphate dehydrogenase [NAD(P)+] from Xylella fastidiosa (strain M23).